A 1737-amino-acid polypeptide reads, in one-letter code: Complement C4 (1737 aa).

The signal sequence occupies residues 1-19 (MRLLWGLAWAFSFFASSLQ). Cys-66 and Cys-95 form a disulfide bridge. Asn-224 and Asn-664 each carry an N-linked (GlcNAc...) asparagine glycan. An intrachain disulfide couples Cys-633 to Cys-667. A propeptide spanning residues 674 to 677 (RQKR) is cleaved from the precursor. Cystine bridges form between Cys-700-Cys-726, Cys-701-Cys-733, and Cys-714-Cys-734. The region spanning 700–734 (CCQDGMTKLPMARTCEQRAARVPQPACREPFLSCC) is the Anaphylatoxin-like domain. The N-linked (GlcNAc...) asparagine glycan is linked to Asn-743. A cross-link (isoglutamyl cysteine thioester (Cys-Gln)) is located at residues 1005–1008 (CAEQ). Residues Asn-1323 and Asn-1386 are each glycosylated (N-linked (GlcNAc...) asparagine). Sulfotyrosine is present on residues Tyr-1412, Tyr-1414, and Tyr-1416. Positions 1443–1446 (RRRR) are excised as a propeptide. 5 disulfide bridges follow: Cys-1464–Cys-1528, Cys-1576–Cys-1581, Cys-1588–Cys-1666, Cys-1611–Cys-1735, and Cys-1711–Cys-1720. The region spanning 1588–1735 (CPRQRRSLER…FLQEYSSQGC (148 aa)) is the NTR domain. The residue at position 1676 (Tyr-1676) is a Sulfotyrosine.

In terms of assembly, in absence of complement activation, circulates in blood as a disulfide-linked trimer of an alpha, beta and gamma chain. Complement C4b is composed of complement C4b-A, complement C4 beta and complement C4 gamma chains that are associated via disulfide bonds. Non-enzymatic component of the C3 convertase, also named C4bC2b, composed of the serine protease complement C2b (C2), as well as complement C4b. Non-enzymatic component of the C5 convertase, also named C4bC2bC3b, composed of the serine protease complement C2b (C2), complement C3b, as well as complement C4b. In terms of processing, prior to secretion, the single-chain precursor is enzymatically cleaved by plasminogen (PLG) to yield non-identical chains alpha, beta and gamma. During activation of the complement systems, the alpha chain is cleaved into C4a and C4b by different proteases depending on the complement pathway: C4b stays linked to the beta and gamma chains, while C4a is released in the plasma. The alpha chain is cleaved by C1S to generate C4a and C4b following activation by the classical complement system. The alpha chain is cleaved to generate C4a and C4b by MASP2 following activation by the lectin complement system. The alpha chain is cleaved by GZMK to generate C4a and C4b following activation by the GZMK complement system. Further degradation of C4b by C1 into the inactive fragments C4c and C4d blocks the generation of C3 convertase. The proteolytic cleavages often are incomplete so that many structural forms can be found in plasma. Upon activation, the internal thioester bond reacts with carbohydrate antigens on the target surface to form amide or ester bonds, leading to covalent association with the surface of pathogens. Post-translationally, complement C4b interacts with complement C3b via a thioester linkage. In terms of processing, N- and O-glycosylated. O-glycosylated with a core 1 or possibly core 8 glycan.

It is found in the secreted. Its subcellular location is the cell surface. In terms of biological role, precursor of non-enzymatic components of the classical, lectin and GZMK complement pathways, which consist in a cascade of proteins that leads to phagocytosis and breakdown of pathogens and signaling that strengthens the adaptive immune system. Functionally, non-enzymatic component of C3 and C5 convertases. Generated following cleavage by complement proteases (C1S, MASP2 or GZMK, depending on the complement pathway), it covalently attaches to the surface of pathogens, where it acts as an opsonin that marks the surface of antigens for removal. It then recruits the serine protease complement C2b to form the C3 and C5 convertases, which cleave and activate C3 and C5, respectively, the next components of the complement pathways. Complement C4b-A isotype is responsible for effective binding to form amide bonds with immune aggregates or protein antigens, while complement C4b-B isotype catalyzes the transacylation of the thioester carbonyl group to form ester bonds with carbohydrate antigens. Putative humoral mediator released following cleavage by complement proteases (C1S, MASP2 or GZMK, depending on the complement pathway). While it is strongly similar to anaphylatoxins, its role is unclear. Was reported to act as a mediator of local inflammatory process; however these effects were probably due to contamination with C3a and/C5a anaphylatoxins in biological assays. This Rattus norvegicus (Rat) protein is Complement C4.